Consider the following 283-residue polypeptide: Nucleoid occlusion protein (283 aa).

The disordered stretch occupies residues 1-21 (MKHSFSRFFGFGEKEEEPEIA). The segment at residues 148 to 167 (EALAQRLGKGQSTIANKLRL) is a DNA-binding region (H-T-H motif).

The protein belongs to the ParB family.

The protein resides in the cytoplasm. It is found in the nucleoid. Its function is as follows. Effects nucleoid occlusion by binding relatively nonspecifically to DNA and preventing the assembly of the division machinery in the vicinity of the nucleoid, especially under conditions that disturb the cell cycle. It helps to coordinate cell division and chromosome segregation by preventing the formation of the Z ring through the nucleoid, which would cause chromosome breakage. The sequence is that of Nucleoid occlusion protein from Bacillus velezensis (strain DSM 23117 / BGSC 10A6 / LMG 26770 / FZB42) (Bacillus amyloliquefaciens subsp. plantarum).